We begin with the raw amino-acid sequence, 200 residues long: Small ribosomal subunit protein eS8A (200 aa).

A disordered region spans residues 1–31; that stretch reads MGISRDSRHKRSATGAKRAQFRKKRKFELGR. The residue at position 62 (Thr62) is a Phosphothreonine. Phosphoserine occurs at positions 66, 69, 73, and 86. Phosphothreonine is present on Thr107. Residues Ser154, Ser155, Ser158, and Ser161 each carry the phosphoserine modification.

Belongs to the eukaryotic ribosomal protein eS8 family. Component of the small ribosomal subunit (SSU). Mature yeast ribosomes consist of a small (40S) and a large (60S) subunit. The 40S small subunit contains 1 molecule of ribosomal RNA (18S rRNA) and 33 different proteins (encoded by 57 genes). The large 60S subunit contains 3 rRNA molecules (25S, 5.8S and 5S rRNA) and 46 different proteins (encoded by 81 genes).

Its subcellular location is the cytoplasm. Its function is as follows. Component of the ribosome, a large ribonucleoprotein complex responsible for the synthesis of proteins in the cell. The small ribosomal subunit (SSU) binds messenger RNAs (mRNAs) and translates the encoded message by selecting cognate aminoacyl-transfer RNA (tRNA) molecules. The large subunit (LSU) contains the ribosomal catalytic site termed the peptidyl transferase center (PTC), which catalyzes the formation of peptide bonds, thereby polymerizing the amino acids delivered by tRNAs into a polypeptide chain. The nascent polypeptides leave the ribosome through a tunnel in the LSU and interact with protein factors that function in enzymatic processing, targeting, and the membrane insertion of nascent chains at the exit of the ribosomal tunnel. This is Small ribosomal subunit protein eS8A from Saccharomyces cerevisiae (strain ATCC 204508 / S288c) (Baker's yeast).